A 90-amino-acid polypeptide reads, in one-letter code: DNA-binding protein HU (90 aa).

Threonine 4 bears the Phosphothreonine mark. The disordered stretch occupies residues 56–90; the sequence is AARKGRNPQTGEEMEIPASKVPAFKPGKALKDAVK.

Belongs to the bacterial histone-like protein family. In terms of assembly, homodimer.

In terms of biological role, histone-like DNA-binding protein which is capable of wrapping DNA to stabilize it, and thus to prevent its denaturation under extreme environmental conditions. This is DNA-binding protein HU (hup) from Geobacillus stearothermophilus (Bacillus stearothermophilus).